We begin with the raw amino-acid sequence, 117 residues long: Pre-mRNA-splicing factor ini1 (117 aa).

The protein belongs to the PHF5 family.

Its subcellular location is the nucleus. Functionally, required for pre-mRNA splicing. The sequence is that of Pre-mRNA-splicing factor ini1 (ini1) from Schizosaccharomyces pombe (strain 972 / ATCC 24843) (Fission yeast).